The following is a 355-amino-acid chain: NADH dehydrogenase-like protein YutJ (355 aa).

The protein belongs to the NADH dehydrogenase family. The cofactor is FAD.

The sequence is that of NADH dehydrogenase-like protein YutJ (yutJ) from Bacillus subtilis (strain 168).